The sequence spans 194 residues: UPF0301 protein FTH_1193 (194 aa).

This sequence belongs to the UPF0301 (AlgH) family.

The sequence is that of UPF0301 protein FTH_1193 from Francisella tularensis subsp. holarctica (strain OSU18).